The primary structure comprises 274 residues: Type II restriction enzyme HgiBI (274 aa).

It belongs to the TdeIII type II restriction endonuclease family.

The enzyme catalyses Endonucleolytic cleavage of DNA to give specific double-stranded fragments with terminal 5'-phosphates.. Its function is as follows. A P subtype restriction enzyme that recognizes the double-stranded sequence 5'-GGWCC-3' and cleaves after G-1. This system is less active than isoschizomeric RM.HgiEI. The polypeptide is Type II restriction enzyme HgiBI (Herpetosiphon aurantiacus (Herpetosiphon giganteus)).